Consider the following 479-residue polypeptide: FAD-dependent monooxygenase ausM (479 aa).

Residues E40, G54, and R113 each contribute to the FAD site. Y224 is a catalytic residue. N289 carries N-linked (GlcNAc...) asparagine glycosylation. FAD contacts are provided by D316 and A329. Residues 449-469 (TLPWLVISLPVLASMLCYLVY) form a helical membrane-spanning segment.

Belongs to the paxM FAD-dependent monooxygenase family. FAD serves as cofactor.

The protein resides in the membrane. It participates in secondary metabolite biosynthesis; terpenoid biosynthesis. Functionally, FAD-dependent monooxygenase; part of the gene cluster B that mediates the biosynthesis of austinol and dehydroaustinol, two fungal meroterpenoids. The first step of the pathway is the synthesis of 3,5-dimethylorsellinic acid by the polyketide synthase ausA. 3,5-dimethylorsellinic acid is then prenylated by the polyprenyl transferase ausN. Further epoxidation by the FAD-dependent monooxygenase ausM and cyclization by the probable terpene cyclase ausL lead to the formation of protoaustinoid A. Protoaustinoid A is then oxidized to spiro-lactone preaustinoid A3 by the combined action of the FAD-binding monooxygenases ausB and ausC, and the dioxygenase ausE. Acid-catalyzed keto-rearrangement and ring contraction of the tetraketide portion of preaustinoid A3 by ausJ lead to the formation of preaustinoid A4. The aldo-keto reductase ausK, with the help of ausH, is involved in the next step by transforming preaustinoid A4 into isoaustinone which is in turn hydroxylated by the P450 monooxygenase ausI to form austinolide. Finally, the cytochrome P450 monooxygenase ausG modifies austinolide to austinol. Austinol can be further modified to dehydroaustinol which forms a diffusible complex with diorcinol that initiates conidiation. Due to genetic rearrangements of the clusters and the subsequent loss of some enzymes, the end products of the Emericella nidulans austinoid biosynthesis clusters are austinol and dehydroaustinol, even if additional enzymes, such as the O-acetyltransferase ausQ and the cytochrome P450 monooxygenase ausR are still functional. The protein is FAD-dependent monooxygenase ausM of Emericella nidulans (strain FGSC A4 / ATCC 38163 / CBS 112.46 / NRRL 194 / M139) (Aspergillus nidulans).